The following is a 471-amino-acid chain: Probable lysophospholipase BODYGUARD 2 (471 aa).

A signal peptide spans 1–45 (MGIARWLNRTVGFFVFALLDIADFLLCYTYKTLDYFLESERKPCY). Cysteine 46 carries N-palmitoyl cysteine lipidation. The AB hydrolase-1 domain occupies 193-296 (VVFIHGFVSS…AIKSLTLLAP (104 aa)). Histidine 197 is a catalytic residue. The active-site Nucleophile is serine 271. Active-site charge relay system residues include aspartate 418 and histidine 446.

Its subcellular location is the cell membrane. It is found in the secreted. It localises to the cell wall. Involved in cuticle development and morphogenesis. The sequence is that of Probable lysophospholipase BODYGUARD 2 from Arabidopsis thaliana (Mouse-ear cress).